The chain runs to 329 residues: uncharacterized protein (329 aa).

2 disordered regions span residues 16–41 (RCGY…SRIC) and 183–229 (LENK…KFEP). Residues 213–229 (SNDKANRGEKGEAKFEP) are compositionally biased toward basic and acidic residues.

As to expression, expressed in testis and epididymis. Expressed at lower levels in ovary.

Its function is as follows. Dispensable for normal development and fertility. This is an uncharacterized protein from Mus musculus (Mouse).